The sequence spans 468 residues: ATP synthase subunit beta (468 aa).

148 to 155 lines the ATP pocket; sequence GGAGVGKT.

The protein belongs to the ATPase alpha/beta chains family. As to quaternary structure, F-type ATPases have 2 components, CF(1) - the catalytic core - and CF(0) - the membrane proton channel. CF(1) has five subunits: alpha(3), beta(3), gamma(1), delta(1), epsilon(1). CF(0) has three main subunits: a(1), b(2) and c(9-12). The alpha and beta chains form an alternating ring which encloses part of the gamma chain. CF(1) is attached to CF(0) by a central stalk formed by the gamma and epsilon chains, while a peripheral stalk is formed by the delta and b chains.

Its subcellular location is the cell membrane. The catalysed reaction is ATP + H2O + 4 H(+)(in) = ADP + phosphate + 5 H(+)(out). Its function is as follows. Produces ATP from ADP in the presence of a proton gradient across the membrane. The catalytic sites are hosted primarily by the beta subunits. The polypeptide is ATP synthase subunit beta (Stenotrophomonas maltophilia (strain K279a)).